A 413-amino-acid chain; its full sequence is Clusterin-associated protein 1 (413 aa).

Positions 185-308 form a coiled coil; that stretch reads MRIAIKDLLA…KEEEKRLLKS (124 aa). Residues 303–413 are disordered; sequence KRLLKSGSND…EPLDESDNDF (111 aa). Acidic residues-rich tracts occupy residues 312-328 and 360-388; these read DDSDIDIQEDDESDSEL and DSDEDEDSEDSEIDMEDDEEDDDDLEDES. Residues Ser-314, Ser-324, and Ser-326 each carry the phosphoserine modification. Ser-409 is modified (phosphoserine).

It belongs to the CLUAP1 family. As to quaternary structure, interacts with CLU/clusterin. Interacts with UBXN10; the interaction is direct. Expressed in all tissues tested including heart, kidney, skeletal muscle, eye, liver, ovary, oviduct, testes, lung and brain. Elevated levels in multiciliated cells such as the bronchioles of the lungs, ependymal cells of the brain and cells with a single primary cilia of heart and kidney.

It localises to the cell projection. The protein localises to the cilium. It is found in the nucleus. Functionally, required for cilia biogenesis. Appears to function within the multiple intraflagellar transport complex B (IFT-B). Key regulator of hedgehog signaling. The protein is Clusterin-associated protein 1 (Cluap1) of Mus musculus (Mouse).